The following is a 270-amino-acid chain: Fibroblast growth factor 5 (270 aa).

Residues Met-1–Ala-20 form the signal peptide. The segment at Leu-26–Trp-83 is disordered. A compositionally biased stretch (low complexity) spans Gly-43–Ser-68. The segment covering Leu-69 to Trp-83 has biased composition (polar residues). An N-linked (GlcNAc...) asparagine glycan is attached at Asn-112. A disordered region spans residues Pro-236–Ser-257.

This sequence belongs to the heparin-binding growth factors family. In terms of assembly, interacts with FGFR1 and FGFR2. Affinity between fibroblast growth factors (FGFs) and their receptors is increased by heparan sulfate glycosaminoglycans that function as coreceptors. As to expression, expressed in skin.

The protein localises to the secreted. Functionally, plays an important role in the regulation of cell proliferation and cell differentiation. Required for normal regulation of the hair growth cycle. Functions as an inhibitor of hair elongation by promoting progression from anagen, the growth phase of the hair follicle, into catagen the apoptosis-induced regression phase. This chain is Fibroblast growth factor 5 (FGF5), found in Felis catus (Cat).